The following is a 202-amino-acid chain: Snake venom metalloproteinase fibrolase (202 aa).

The region spanning 6–202 (RYIELVIVAD…HNPQCILNQP (197 aa)) is the Peptidase M12B domain. Residue Glu-9 coordinates Ca(2+). N-linked (GlcNAc...) asparagine glycosylation occurs at Asn-25. Asp-93 provides a ligand contact to Ca(2+). 3 disulfide bridges follow: Cys-117–Cys-197, Cys-157–Cys-181, and Cys-159–Cys-164. Residue His-142 participates in Zn(2+) binding. The active site involves Glu-143. Zn(2+)-binding residues include His-146 and His-152. 2 residues coordinate Ca(2+): Cys-197 and Asn-200.

This sequence belongs to the venom metalloproteinase (M12B) family. P-I subfamily. Monomer. Zn(2+) serves as cofactor. Glycosylated. As to expression, expressed by the venom gland.

It localises to the secreted. The enzyme catalyses Hydrolysis of 14-Ala-|-Leu-15 in insulin B chain and 413-Lys-|-Leu-414 in alpha-chain of fibrinogen.. Activated by calcium and magnesium ions. Inhibited by EDTA, DTT and L-cysteine. Activity is not affected by PMSF or heparin. In terms of biological role, has fibrino(geno)lytic activity on the alpha and beta chains of fibrinogen (FGA and FGB). Inhibits human ADP- and collagen-induced platelet aggregation on platelet-rich plasma but does not affect the thrombin-induced aggregation of rabbit washed platelets. Slightly degrades plasminogen. The chain is Snake venom metalloproteinase fibrolase from Macrovipera lebetinus (Levantine viper).